A 197-amino-acid polypeptide reads, in one-letter code: Nascent polypeptide-associated complex subunit alpha (197 aa).

Over residues 1–20 (MAEPVEDSVDEISSEGDSDV) the composition is skewed to acidic residues. Disordered regions lie at residues 1–46 (MAEP…RKLL) and 120–154 (GADR…SKAD). The NAC-A/B domain occupies 36–101 (DKNERKSRKL…AKVEDMSQNS (66 aa)). Basic and acidic residues predominate over residues 134–154 (SGHDHAHDHDHSHGDCASKAD). Residues 158–195 (VNQSDIDLVVSQVGCTREQAVEALIKNKGDIVETIMQL) enclose the UBA domain.

It belongs to the NAC-alpha family.

Its function is as follows. May promote appropriate targeting of ribosome-nascent polypeptide complexes. The protein is Nascent polypeptide-associated complex subunit alpha of Babesia divergens.